We begin with the raw amino-acid sequence, 993 residues long: MGMRPPAGLPSLSKRSRVLLVLALVVAALLLVGPRLISTYTDWLWFGEVGFRGVFTTVLVTRLLLFLVVGVVVGGIVWLALLLAYRSRPVFVPVSGPNDPVARYRTTVMTRLRLFGLAIPIAVGLLAGLIAQSSWVTVQLFVNGGSFGVADPEFGLDVGFYTFDLPFYRFVLNWLFVAVLLAFFASLVTHYIFGGLKLAGRGGALTNAARVQLAVLAGTFILLKAVAYWFDRYSLLSSSRKEPTFTGGSYTDMNAVLQAKLILLAIAVICAGAFFAAIFLRDLRIPAMATALLVLSSILVGAVWPLVVEQFSVRPNAADKESAYIERNIAATRQAYGITDDKVEYQDYQGYGTTPPRDVPADVTTIANTRLLDPNILSRTFTQQQQLKNFYGFPPTLDIDRYDIDGEMRDYIVAARELSSKSLTGNQTDWINKHTVYTHGNGLVAAPANRVNAAAGESAEEAANSNSGYPVYMVSDIASQAAGDQVIPVEQPRIYYGEVIADTDADYAIVGGSEGSDPREYDTDTSRYTYTGSGGVPIGNWFNRLAFAAKYTERNILFSGAIGSDSKIIYNRDPRDRVTHVAPWLTADGDSYPAVVDGKVVWIVDAYTTLQDYPYAQRSSLDGLVEDSIDQNTGRLLPRKEVSYIRNSVKATVDAYDGTVKLYQVDQNDPVLDAWMGVFPDAVQPADSIPDELRAHFRYPEDLFKVQREMLAKYHVDDPKEFFTNNAFWSVPSDPTIDTSANQPPYYVLVGDPETGKPSFNLTSAMVGYSREFLSAYLSVKSDPENYGKFTVLQLPTDTQTQGPQQTQNSMISDPRVASERTLLERSNKIQYGNLLTLPIANGGILYVEPMYTERSSTGPNTSTFPQLSRVLVSYREPPPSNSVRVGYAPTLAQALDQVFGAGTGSVATAPSAEEGTPPETGTTPPVEQGAAPPAPTAPATPPSGTDVSAAVAELDASLDALTAAQRSGDFAAYGAALARVQKAVAAYEAIPK.

7 helical membrane-spanning segments follow: residues 18–38 (VLLVLALVVAALLLVGPRLIS), 63–83 (LLLFLVVGVVVGGIVWLALLL), 114–134 (LFGLAIPIAVGLLAGLIAQSS), 174–194 (WLFVAVLLAFFASLVTHYIFG), 211–231 (VQLAVLAGTFILLKAVAYWFD), 260–280 (KLILLAIAVICAGAFFAAIFL), and 288–308 (MATALLVLSSILVGAVWPLVV). Positions 904 to 948 (TGSVATAPSAEEGTPPETGTTPPVEQGAAPPAPTAPATPPSGTDV) are disordered. Positions 908–926 (ATAPSAEEGTPPETGTTPP) are enriched in low complexity. The segment covering 933–942 (PPAPTAPATP) has biased composition (pro residues).

This sequence belongs to the UPF0182 family.

It is found in the cell membrane. In Rhodococcus opacus (strain B4), this protein is UPF0182 protein ROP_64500.